The following is a 312-amino-acid chain: Coiled-coil domain-containing protein 160 homolog (312 aa).

A coiled-coil region spans residues 126-281 (SEGAKFKNQL…EERKREKTHS (156 aa)).

It belongs to the CCDC160 family.

This Xenopus tropicalis (Western clawed frog) protein is Coiled-coil domain-containing protein 160 homolog.